An 804-amino-acid polypeptide reads, in one-letter code: Probable replication endonuclease from prophage-like region (804 aa).

Active-site O-(5'-phospho-DNA)-tyrosine intermediate residues include Y498 and Y502.

The protein belongs to the phage GPA family.

In terms of biological role, possible endonuclease which induces a single-strand cut and initiates DNA replication. The protein is Probable replication endonuclease from prophage-like region of Shigella boydii serotype 4 (strain Sb227).